We begin with the raw amino-acid sequence, 397 residues long: Putative 8-amino-7-oxononanoate synthase (397 aa).

Substrate is bound at residue Arg-22. Pyridoxal 5'-phosphate is bound at residue 109-110 (GW). Residue His-139 participates in substrate binding. Pyridoxal 5'-phosphate is bound by residues Ser-187, 212-215 (DEAH), and 241-244 (TFSK). Lys-244 carries the post-translational modification N6-(pyridoxal phosphate)lysine. Thr-358 lines the substrate pocket.

Belongs to the class-II pyridoxal-phosphate-dependent aminotransferase family. BioF subfamily. In terms of assembly, homodimer. Pyridoxal 5'-phosphate serves as cofactor.

It catalyses the reaction 6-carboxyhexanoyl-[ACP] + L-alanine + H(+) = (8S)-8-amino-7-oxononanoate + holo-[ACP] + CO2. The protein operates within cofactor biosynthesis; biotin biosynthesis. Catalyzes the decarboxylative condensation of pimeloyl-[acyl-carrier protein] and L-alanine to produce 8-amino-7-oxononanoate (AON), [acyl-carrier protein], and carbon dioxide. The chain is Putative 8-amino-7-oxononanoate synthase (bioF) from Bordetella parapertussis (strain 12822 / ATCC BAA-587 / NCTC 13253).